A 675-amino-acid chain; its full sequence is MSENVELRRAHILANHILRSPRPSSNPSLTPEVCFQYSPPELNESYGFEVKEMRKLLDGHNLEERDWLYGLMMQSNLFNPKQRGGQIFVSPDYNQTMEQQRQISMKRIFYLLEKGVFQGWLTETGPEAELKKFALYEVCGIYDYSLSAKLGVHFLLWGNAVKFFGTKRHHEKWLKDTEDYVVKGCFAMTELGHGTNVRGIETVTTYDPTTEEFVINTPCESAQKYWIGEAANHANHAIVISQLSMNGTNQGIHVFIAQIRDHDGNTCPNVRIADCGHKIGLNGVDNGRIWFDNLRIPRENLLNSVADVLADGKYVSSIKDPDQRFGAFLAPLTSGRVTIASSAIYSAKLGLAVAIRYSLSRRAFSVAANGPEVLLLDYPSHQRRLLPLLAKTYAMSFAVNDLKMIYVKRTPETNKAIHVVSSGFKAVLTWHNMRTLQECREAVGGQGLKTENRVGHLKGEYDVQTTFEGDNNVLMQLVSKALFAEYVSCKKRNKPFKGLGLEHMNSPRPVLPTQLTSSTLRCSQFQKSVFCLRERDLLERFTSEVAELQGRGESREFLFLLNHQLSEDLSKAFTEKAILQTVLDAEAKLPPGSVKDVLGLVRSMYALISLEEDPSLLRYGHLSRDNVGDVRKEVSKLCGELRPHALALVASFGIPDAFLSPIAFNWVEANAWSSL.

The transit peptide at 1–34 directs the protein to the peroxisome; that stretch reads MSENVELRRAHILANHILRSPRPSSNPSLTPEVC. Residue 442 to 457 participates in FAD binding; that stretch reads AVGGQGLKTENRVGHL.

Belongs to the acyl-CoA oxidase family. FAD serves as cofactor.

It is found in the peroxisome. It catalyses the reaction a 2,3-saturated acyl-CoA + O2 = a (2E)-enoyl-CoA + H2O2. In terms of biological role, catalyzes the desaturation of acyl-CoAs to 2-trans-enoyl-CoAs. The protein is Putative acyl-coenzyme A oxidase 3.2, peroxisomal (ACX3.2) of Arabidopsis thaliana (Mouse-ear cress).